A 458-amino-acid chain; its full sequence is 3-isopropylmalate dehydratase large subunit (458 aa).

3 residues coordinate [4Fe-4S] cluster: Cys-337, Cys-397, and Cys-400.

It belongs to the aconitase/IPM isomerase family. LeuC type 1 subfamily. As to quaternary structure, heterodimer of LeuC and LeuD. The cofactor is [4Fe-4S] cluster.

The catalysed reaction is (2R,3S)-3-isopropylmalate = (2S)-2-isopropylmalate. It participates in amino-acid biosynthesis; L-leucine biosynthesis; L-leucine from 3-methyl-2-oxobutanoate: step 2/4. Catalyzes the isomerization between 2-isopropylmalate and 3-isopropylmalate, via the formation of 2-isopropylmaleate. The polypeptide is 3-isopropylmalate dehydratase large subunit (Leuconostoc mesenteroides subsp. mesenteroides (strain ATCC 8293 / DSM 20343 / BCRC 11652 / CCM 1803 / JCM 6124 / NCDO 523 / NBRC 100496 / NCIMB 8023 / NCTC 12954 / NRRL B-1118 / 37Y)).